Here is a 315-residue protein sequence, read N- to C-terminus: Ornithine carbamoyltransferase, anabolic (315 aa).

Residues 57–60 (STRT), glutamine 84, arginine 108, and 135–138 (HPCQ) contribute to the carbamoyl phosphate site. Residues asparagine 166, aspartate 230, and 234 to 235 (SM) contribute to the L-ornithine site. Residues 270 to 271 (CL) and arginine 298 each bind carbamoyl phosphate.

It belongs to the aspartate/ornithine carbamoyltransferase superfamily. OTCase family. As to quaternary structure, homododecamer (tetramer of trimers).

It is found in the cytoplasm. The catalysed reaction is carbamoyl phosphate + L-ornithine = L-citrulline + phosphate + H(+). It participates in amino-acid biosynthesis; L-arginine biosynthesis; L-arginine from L-ornithine and carbamoyl phosphate: step 1/3. With respect to regulation, inhibited by the bisubstrate delta-N-phosphonoacetyl-L-ornithine (PALO). Functionally, reversibly catalyzes the transfer of the carbamoyl group from carbamoyl phosphate (CP) to the N(epsilon) atom of ornithine (ORN) to produce L-citrulline, which is a substrate for argininosuccinate synthetase, the enzyme involved in the final step in arginine biosynthesis. The sequence is that of Ornithine carbamoyltransferase, anabolic from Pyrococcus furiosus (strain ATCC 43587 / DSM 3638 / JCM 8422 / Vc1).